The chain runs to 1290 residues: DNA-directed RNA polymerase subunit beta' (1290 aa).

The Zn(2+) site is built by Cys68, Cys70, Cys83, and Cys86. 3 residues coordinate Mg(2+): Asp530, Asp532, and Asp534. Residues Cys909, Cys985, Cys992, and Cys995 each coordinate Zn(2+).

The protein belongs to the RNA polymerase beta' chain family. As to quaternary structure, the RNAP catalytic core consists of 2 alpha, 1 beta, 1 beta' and 1 omega subunit. When a sigma factor is associated with the core the holoenzyme is formed, which can initiate transcription. The cofactor is Mg(2+). Zn(2+) serves as cofactor.

The enzyme catalyses RNA(n) + a ribonucleoside 5'-triphosphate = RNA(n+1) + diphosphate. DNA-dependent RNA polymerase catalyzes the transcription of DNA into RNA using the four ribonucleoside triphosphates as substrates. This chain is DNA-directed RNA polymerase subunit beta', found in Mycoplasma pneumoniae (strain ATCC 29342 / M129 / Subtype 1) (Mycoplasmoides pneumoniae).